Consider the following 270-residue polypeptide: Undecaprenyl-diphosphatase (270 aa).

The next 7 membrane-spanning stretches (helical) occupy residues M1–V21, F92–F112, A119–L139, L150–I170, F193–L213, L223–V243, and G250–L270.

The protein belongs to the UppP family.

It localises to the cell inner membrane. It carries out the reaction di-trans,octa-cis-undecaprenyl diphosphate + H2O = di-trans,octa-cis-undecaprenyl phosphate + phosphate + H(+). Functionally, catalyzes the dephosphorylation of undecaprenyl diphosphate (UPP). Confers resistance to bacitracin. The polypeptide is Undecaprenyl-diphosphatase (Salinibacter ruber (strain DSM 13855 / M31)).